The primary structure comprises 34 residues: Photosystem II reaction center protein Psb30 (34 aa).

The helical transmembrane segment at 6–26 (IVAQLLSLALVTLSGPAVIFL) threads the bilayer.

This sequence belongs to the Psb30/Ycf12 family. In terms of assembly, PSII is composed of 1 copy each of membrane proteins PsbA, PsbB, PsbC, PsbD, PsbE, PsbF, PsbH, PsbI, PsbJ, PsbK, PsbL, PsbM, PsbT, PsbX, PsbY, PsbZ, Psb30/Ycf12, peripheral proteins of the oxygen-evolving complex and a large number of cofactors. It forms dimeric complexes.

The protein localises to the plastid. It is found in the chloroplast thylakoid membrane. In terms of biological role, a core subunit of photosystem II (PSII), probably helps stabilize the reaction center. This is Photosystem II reaction center protein Psb30 from Emiliania huxleyi (Coccolithophore).